We begin with the raw amino-acid sequence, 1057 residues long: Carbamoyl phosphate synthase large chain (1057 aa).

The tract at residues 1–401 is carboxyphosphate synthetic domain; that stretch reads MPKREDINKI…ATQKAIRSLD (401 aa). Residues Arg-129, Arg-169, Gly-175, Gly-176, Gln-208, Ile-210, Glu-215, Gly-241, Ile-242, His-243, Gln-284, and Glu-298 each contribute to the ATP site. Residues 133–327 enclose the ATP-grasp 1 domain; it reads RALMNDLNEP…IAKVAAKIAV (195 aa). The Mg(2+) site is built by Gln-284, Glu-298, and Asn-300. Residues Gln-284, Glu-298, and Asn-300 each coordinate Mn(2+). The tract at residues 402 to 546 is oligomerization domain; sequence IDINYIGDEE…YSTYELENES (145 aa). Residues 547-929 are carbamoyl phosphate synthetic domain; it reads IVSNRKSIVV…ALYKAFEGAK (383 aa). Residues 671–861 form the ATP-grasp 2 domain; that stretch reads NKLIQANGIR…MARLATRAIL (191 aa). Residues Arg-707, Gln-746, Leu-748, Glu-752, Gly-777, Val-778, His-779, Ser-780, Gln-820, and Glu-832 each coordinate ATP. Mg(2+)-binding residues include Gln-820, Glu-832, and Asn-834. Mn(2+) is bound by residues Gln-820, Glu-832, and Asn-834. The MGS-like domain occupies 930–1057; the sequence is MHMPDHGKVL…ESQAFTTLHL (128 aa). Positions 930 to 1057 are allosteric domain; sequence MHMPDHGKVL…ESQAFTTLHL (128 aa).

The protein belongs to the CarB family. Composed of two chains; the small (or glutamine) chain promotes the hydrolysis of glutamine to ammonia, which is used by the large (or ammonia) chain to synthesize carbamoyl phosphate. Tetramer of heterodimers (alpha,beta)4. Mg(2+) serves as cofactor. The cofactor is Mn(2+).

It catalyses the reaction hydrogencarbonate + L-glutamine + 2 ATP + H2O = carbamoyl phosphate + L-glutamate + 2 ADP + phosphate + 2 H(+). It carries out the reaction hydrogencarbonate + NH4(+) + 2 ATP = carbamoyl phosphate + 2 ADP + phosphate + 2 H(+). The protein operates within amino-acid biosynthesis; L-arginine biosynthesis; carbamoyl phosphate from bicarbonate: step 1/1. It functions in the pathway pyrimidine metabolism; UMP biosynthesis via de novo pathway; (S)-dihydroorotate from bicarbonate: step 1/3. Its function is as follows. Large subunit of the glutamine-dependent carbamoyl phosphate synthetase (CPSase). CPSase catalyzes the formation of carbamoyl phosphate from the ammonia moiety of glutamine, carbonate, and phosphate donated by ATP, constituting the first step of 2 biosynthetic pathways, one leading to arginine and/or urea and the other to pyrimidine nucleotides. The large subunit (synthetase) binds the substrates ammonia (free or transferred from glutamine from the small subunit), hydrogencarbonate and ATP and carries out an ATP-coupled ligase reaction, activating hydrogencarbonate by forming carboxy phosphate which reacts with ammonia to form carbamoyl phosphate. This Pediococcus pentosaceus (strain ATCC 25745 / CCUG 21536 / LMG 10740 / 183-1w) protein is Carbamoyl phosphate synthase large chain.